The chain runs to 309 residues: Mitochondrial import receptor subunit TOM34 (309 aa).

Phosphoserine is present on S8. TPR repeat units lie at residues 9–42 (VEQL…LQAR), 51–84 (SVLY…VPFS), and 86–118 (KPLL…DNSV). Residues 158–187 (WSSLPSENHKETAKSKSKETTATKNRVPSA) form a disordered region. Residue S160 is modified to Phosphoserine. The segment covering 164–178 (ENHKETAKSKSKETT) has biased composition (basic and acidic residues). S186 bears the Phosphoserine mark. 3 TPR repeats span residues 193 to 226 (ARVL…SSLE), 227 to 260 (SATY…DGKN), and 262 to 294 (KAFY…EPRN). A Glycyl lysine isopeptide (Lys-Gly) (interchain with G-Cter in SUMO2) cross-link involves residue K197.

It belongs to the Tom34 family. As to quaternary structure, interacts with HSP90A, VCP, ATP6V1D, KIAA0665, AMPK, and DMAP1 through its TPR repeat.

The protein resides in the cytoplasm. It localises to the mitochondrion outer membrane. Functionally, plays a role in the import of cytosolically synthesized preproteins into mitochondria. Binds the mature portion of precursor proteins. Interacts with cellular components, and possesses weak ATPase activity. May be a chaperone-like protein that helps to keep newly synthesized precursors in an unfolded import compatible state. The sequence is that of Mitochondrial import receptor subunit TOM34 (Tomm34) from Rattus norvegicus (Rat).